A 224-amino-acid polypeptide reads, in one-letter code: MTEKSICPSRDNGVVIPDNWTGYDLDVFSLPNHYCEDLECVFIPHGVIVDRTERIANDIMRDIGDNHITVLCVLKGGYRFCTDLVEHIKNLSRNSERFISMRVDFIRLKCYCNDQCMDELQILGGEDLAKLSGKNVLIVEDIINTGRTMTALLSQLEKYKPKMVKVASLLVKRSASSNQYRPDYTGFEIPNKFVVGYALDYNEYFRDLHHICVINEKGKNKYKV.

Mg(2+) contacts are provided by glutamate 140 and aspartate 141. Residues 140–148 (EDIINTGRT), lysine 172, 193–194 (FV), and aspartate 200 each bind GMP. Aspartate 200 is a binding site for Mg(2+).

The protein belongs to the purine/pyrimidine phosphoribosyltransferase family.

The chain is Phosphoribosyltransferase domain-containing protein 1 (prtfdc1) from Xenopus tropicalis (Western clawed frog).